The sequence spans 618 residues: Membrane protein insertase YidC (618 aa).

The next 6 membrane-spanning stretches (helical) occupy residues 3–23, 363–383, 439–459, 478–498, 520–540, and 545–565; these read KNTITGLVLIGILLVGFSFLS, WGLSMGIVLLLLTIMVKIVVF, LPMLLQFPILMALFMFVPSAI, FITFPFHIPFLGNHLSLFCLL, PQMAAMKWMMYLMPIMFLFVL, and SGLNYYYFISTLISVVTMIIL.

Belongs to the OXA1/ALB3/YidC family. Type 1 subfamily. As to quaternary structure, interacts with the Sec translocase complex via SecD. Specifically interacts with transmembrane segments of nascent integral membrane proteins during membrane integration.

The protein localises to the cell inner membrane. In terms of biological role, required for the insertion and/or proper folding and/or complex formation of integral membrane proteins into the membrane. Involved in integration of membrane proteins that insert both dependently and independently of the Sec translocase complex, as well as at least some lipoproteins. Aids folding of multispanning membrane proteins. The protein is Membrane protein insertase YidC of Bacteroides fragilis (strain ATCC 25285 / DSM 2151 / CCUG 4856 / JCM 11019 / LMG 10263 / NCTC 9343 / Onslow / VPI 2553 / EN-2).